The chain runs to 157 residues: Epithelial membrane protein 1 (157 aa).

The helical transmembrane segment at 1–21 (MLVLLAGIFVVHIATVIMLFV) threads the bilayer. N-linked (GlcNAc...) asparagine glycosylation is found at N43 and N46. 3 consecutive transmembrane segments (helical) span residues 67–87 (FMIL…FQLF), 95–115 (FFLS…GVSI), and 134–154 (YILG…YLVL).

Belongs to the PMP-22/EMP/MP20 family.

It localises to the membrane. The polypeptide is Epithelial membrane protein 1 (EMP1) (Homo sapiens (Human)).